Reading from the N-terminus, the 363-residue chain is Putative RAD2-like endonuclease 095R (363 aa).

The protein belongs to the XPG/RAD2 endonuclease family. It depends on Mg(2+) as a cofactor.

Its subcellular location is the host nucleus. In terms of biological role, probable endonuclease. This is Putative RAD2-like endonuclease 095R from Frog virus 3 (isolate Goorha) (FV-3).